The chain runs to 227 residues: Cytochrome c oxidase subunit 2 (227 aa).

The Mitochondrial intermembrane segment spans residues 1–14 (MAYPLQLGLQDATS). Residues 15–45 (PIMEELTSFHDHTLMIVFLISSLVLYIISSM) traverse the membrane as a helical segment. Residues 46 to 59 (LTTKMTHTNTMDAQ) lie on the Mitochondrial matrix side of the membrane. The helical transmembrane segment at 60 to 87 (GVETIWTILPAAILVLIALPSLRILYMM) threads the bilayer. At 88 to 227 (DEINNPALTV…HFENWSASMI (140 aa)) the chain is on the mitochondrial intermembrane side. Residues H161, C196, E198, C200, H204, and M207 each coordinate Cu cation. E198 provides a ligand contact to Mg(2+).

This sequence belongs to the cytochrome c oxidase subunit 2 family. As to quaternary structure, component of the cytochrome c oxidase (complex IV, CIV), a multisubunit enzyme composed of 14 subunits. The complex is composed of a catalytic core of 3 subunits MT-CO1, MT-CO2 and MT-CO3, encoded in the mitochondrial DNA, and 11 supernumerary subunits COX4I, COX5A, COX5B, COX6A, COX6B, COX6C, COX7A, COX7B, COX7C, COX8 and NDUFA4, which are encoded in the nuclear genome. The complex exists as a monomer or a dimer and forms supercomplexes (SCs) in the inner mitochondrial membrane with NADH-ubiquinone oxidoreductase (complex I, CI) and ubiquinol-cytochrome c oxidoreductase (cytochrome b-c1 complex, complex III, CIII), resulting in different assemblies (supercomplex SCI(1)III(2)IV(1) and megacomplex MCI(2)III(2)IV(2)). Found in a complex with TMEM177, COA6, COX18, COX20, SCO1 and SCO2. Interacts with TMEM177 in a COX20-dependent manner. Interacts with COX20. Interacts with COX16. It depends on Cu cation as a cofactor.

The protein resides in the mitochondrion inner membrane. It carries out the reaction 4 Fe(II)-[cytochrome c] + O2 + 8 H(+)(in) = 4 Fe(III)-[cytochrome c] + 2 H2O + 4 H(+)(out). Functionally, component of the cytochrome c oxidase, the last enzyme in the mitochondrial electron transport chain which drives oxidative phosphorylation. The respiratory chain contains 3 multisubunit complexes succinate dehydrogenase (complex II, CII), ubiquinol-cytochrome c oxidoreductase (cytochrome b-c1 complex, complex III, CIII) and cytochrome c oxidase (complex IV, CIV), that cooperate to transfer electrons derived from NADH and succinate to molecular oxygen, creating an electrochemical gradient over the inner membrane that drives transmembrane transport and the ATP synthase. Cytochrome c oxidase is the component of the respiratory chain that catalyzes the reduction of oxygen to water. Electrons originating from reduced cytochrome c in the intermembrane space (IMS) are transferred via the dinuclear copper A center (CU(A)) of subunit 2 and heme A of subunit 1 to the active site in subunit 1, a binuclear center (BNC) formed by heme A3 and copper B (CU(B)). The BNC reduces molecular oxygen to 2 water molecules using 4 electrons from cytochrome c in the IMS and 4 protons from the mitochondrial matrix. In Acomys ignitus (Fiery spiny mouse), this protein is Cytochrome c oxidase subunit 2 (MT-CO2).